The sequence spans 883 residues: Phosphoenolpyruvate carboxylase (883 aa).

Residues H138 and K546 contribute to the active site.

Belongs to the PEPCase type 1 family. Requires Mg(2+) as cofactor.

It carries out the reaction oxaloacetate + phosphate = phosphoenolpyruvate + hydrogencarbonate. Functionally, forms oxaloacetate, a four-carbon dicarboxylic acid source for the tricarboxylic acid cycle. This is Phosphoenolpyruvate carboxylase from Salmonella schwarzengrund (strain CVM19633).